A 107-amino-acid polypeptide reads, in one-letter code: Flagellar hook-basal body complex protein FliE (107 aa).

Belongs to the FliE family.

It is found in the bacterial flagellum basal body. This chain is Flagellar hook-basal body complex protein FliE, found in Sodalis glossinidius (strain morsitans).